Here is a 457-residue protein sequence, read N- to C-terminus: Cysteine--tRNA ligase (457 aa).

A Zn(2+)-binding site is contributed by C28. The short motif at 30–40 is the 'HIGH' region element; sequence PTVYDTAHIGN. 3 residues coordinate Zn(2+): C212, H237, and E241. Residues 270–274 carry the 'KMSKS' region motif; the sequence is KMSKS. Residue K273 coordinates ATP.

Belongs to the class-I aminoacyl-tRNA synthetase family. As to quaternary structure, monomer. The cofactor is Zn(2+).

The protein resides in the cytoplasm. The catalysed reaction is tRNA(Cys) + L-cysteine + ATP = L-cysteinyl-tRNA(Cys) + AMP + diphosphate. In Wolbachia pipientis wMel, this protein is Cysteine--tRNA ligase.